Reading from the N-terminus, the 456-residue chain is Trigger factor (456 aa).

A PPIase FKBP-type domain is found at glycine 166 to proline 245.

This sequence belongs to the FKBP-type PPIase family. Tig subfamily.

Its subcellular location is the cytoplasm. It carries out the reaction [protein]-peptidylproline (omega=180) = [protein]-peptidylproline (omega=0). Involved in protein export. Acts as a chaperone by maintaining the newly synthesized protein in an open conformation. Functions as a peptidyl-prolyl cis-trans isomerase. This Bifidobacterium adolescentis (strain ATCC 15703 / DSM 20083 / NCTC 11814 / E194a) protein is Trigger factor.